A 255-amino-acid chain; its full sequence is Pimeloyl-[acyl-carrier protein] methyl ester esterase (255 aa).

Substrate is bound by residues Trp18, Ser78–Leu79, and Phe139–Asp143. The Nucleophile role is filled by Ser78. Residues Asp203 and His233 contribute to the active site. A substrate-binding site is contributed by His233.

Belongs to the AB hydrolase superfamily. Carboxylesterase BioH family. Monomer.

The protein localises to the cytoplasm. The enzyme catalyses 6-carboxyhexanoyl-[ACP] methyl ester + H2O = 6-carboxyhexanoyl-[ACP] + methanol + H(+). The protein operates within cofactor biosynthesis; biotin biosynthesis. Its function is as follows. The physiological role of BioH is to remove the methyl group introduced by BioC when the pimeloyl moiety is complete. It allows to synthesize pimeloyl-ACP via the fatty acid synthetic pathway through the hydrolysis of the ester bonds of pimeloyl-ACP esters. This chain is Pimeloyl-[acyl-carrier protein] methyl ester esterase, found in Xylella fastidiosa (strain M12).